The primary structure comprises 186 residues: RIO-type serine/threonine-protein kinase Rio1 (186 aa).

Lys-15 contacts ATP. Residue Asp-124 is the Proton acceptor of the active site. 2 residues coordinate Mg(2+): Asn-129 and Asp-140. Asp-140 acts as the 4-aspartylphosphate intermediate in catalysis.

The protein belongs to the protein kinase superfamily. RIO-type Ser/Thr kinase family.

It carries out the reaction L-seryl-[protein] + ATP = O-phospho-L-seryl-[protein] + ADP + H(+). It catalyses the reaction L-threonyl-[protein] + ATP = O-phospho-L-threonyl-[protein] + ADP + H(+). The catalysed reaction is ATP + H2O = ADP + phosphate + H(+). Its function is as follows. Despite the protein kinase domain is proposed to act predominantly as an ATPase. The polypeptide is RIO-type serine/threonine-protein kinase Rio1 (rio1) (Thermoplasma acidophilum (strain ATCC 25905 / DSM 1728 / JCM 9062 / NBRC 15155 / AMRC-C165)).